The sequence spans 423 residues: Gamma-glutamyl phosphate reductase (423 aa).

This sequence belongs to the gamma-glutamyl phosphate reductase family.

The protein localises to the cytoplasm. The enzyme catalyses L-glutamate 5-semialdehyde + phosphate + NADP(+) = L-glutamyl 5-phosphate + NADPH + H(+). It participates in amino-acid biosynthesis; L-proline biosynthesis; L-glutamate 5-semialdehyde from L-glutamate: step 2/2. Functionally, catalyzes the NADPH-dependent reduction of L-glutamate 5-phosphate into L-glutamate 5-semialdehyde and phosphate. The product spontaneously undergoes cyclization to form 1-pyrroline-5-carboxylate. This chain is Gamma-glutamyl phosphate reductase, found in Burkholderia orbicola (strain AU 1054).